The sequence spans 419 residues: Transcriptional regulator Myc-A (419 aa).

The 9aaTAD motif lies at 78–86; the sequence is EMVTEFLGG. Disordered regions lie at residues 141 to 166, 206 to 274, and 319 to 344; these read ALSS…HGSL, SPCQ…HYSP, and NNRK…NVLE. The span at 226–245 shows a compositional bias: acidic residues; it reads ESEEEPEDEDEDCDEEEEID. The span at 248–261 shows a compositional bias: basic and acidic residues; it reads TVEKRQSASKRVES. Positions 319 to 328 are enriched in polar residues; sequence NNRKCASPRS. A bHLH domain is found at 335–387; it reads DKRKTHNVLERQRRNELKLSFFALRDQVPEVASNEKAPKVVILKKATEYAISL. Positions 387–415 are leucine-zipper; that stretch reads LQEDERRLIRETEQLKYRKEQLKQRLQQL.

As to quaternary structure, efficient DNA binding requires dimerization with another bHLH protein. Binds DNA as a heterodimer with MAX.

Its subcellular location is the nucleus. Its function is as follows. Transcription factor that binds DNA in a non-specific manner, yet also specifically recognizes the core sequence 5'-CAC[GA]TG-3'. Activates the transcription of growth-related genes. This is Transcriptional regulator Myc-A (myc-a) from Xenopus laevis (African clawed frog).